Consider the following 486-residue polypeptide: Palmitoyltransferase pfa4 (486 aa).

Topologically, residues 1 to 15 (MTNLQTGPTTRGLQR) are cytoplasmic. The helical transmembrane segment at 16–36 (FAIPAVCGLIIFLGYYSQYLF) threads the bilayer. Over 37-51 (NTSADLAPGPLTCRE) the chain is Lumenal. A helical membrane pass occupies residues 52 to 72 (SLIFNILLVCLWLTYYQACTV). At 73–146 (DPGQYKFPPK…NCVSLQTFPH (74 aa)) the chain is on the cytoplasmic side. A compositionally biased stretch (basic and acidic residues) spans 81-91 (PKEKEDGDNNN). The interval 81-101 (PKEKEDGDNNNKRGGRGPQKA) is disordered. A DHHC domain is found at 102 to 152 (KWCKKCDAPKPPRAHHCRHCARCIPRMDHHCPWTGNCVSLQTFPHFLRFLV). C132 functions as the S-palmitoyl cysteine intermediate in the catalytic mechanism. A helical membrane pass occupies residues 147–166 (FLRFLVYTNAALVYFARLLW). At 167-178 (TRLYYGLWDQRH) the chain is on the lumenal side. A helical transmembrane segment spans residues 179 to 201 (VPAYLGPSVGALLGCTMLSIAWF). Over 202 to 486 (ATQFALMVLL…RKVKSNGVHE (285 aa)) the chain is Cytoplasmic. Residues 314 to 420 (NDRVGMWPPP…QDGRAWMNSE (107 aa)) are disordered. 2 stretches are compositionally biased toward basic and acidic residues: residues 324–333 (DPEKLRRERA) and 346–376 (LNTE…DLRR). The segment covering 386–399 (EEDEIMAELEEDEG) has biased composition (acidic residues).

This sequence belongs to the DHHC palmitoyltransferase family. PFA4 subfamily.

The protein localises to the endoplasmic reticulum membrane. The enzyme catalyses L-cysteinyl-[protein] + hexadecanoyl-CoA = S-hexadecanoyl-L-cysteinyl-[protein] + CoA. Functionally, mediates the reversible addition of palmitate to target proteins, thereby regulating their membrane association and biological function. This Neurospora crassa (strain ATCC 24698 / 74-OR23-1A / CBS 708.71 / DSM 1257 / FGSC 987) protein is Palmitoyltransferase pfa4.